The following is a 471-amino-acid chain: Phosphatidylserine synthase 1 (471 aa).

An N-acetylalanine modification is found at Ala2. The Cytoplasmic segment spans residues 2 to 35; the sequence is ASCVGSRTLSKDDVNYRMHFRMINEQQVEDITID. A helical membrane pass occupies residues 36 to 56; sequence FFYRPHTITLLSFTIVSLMYF. At 57 to 72 the chain is on the lumenal side; sequence AFTRDDSVPEDNIWRG. A helical membrane pass occupies residues 73 to 93; it reads ILSVIFFFLIISVLAFPNGPF. The Cytoplasmic portion of the chain corresponds to 94 to 102; that stretch reads TRPHPALWR. Residues 103-123 form a helical membrane-spanning segment; it reads MVFGLSVLYFLFLVFLLFLNF. At 124–160 the chain is on the lumenal side; that stretch reads EQVKSLMYWLDPNLRYATREADIMEYAVNCHVITWER. The chain crosses the membrane as a helical span at residues 161–181; that stretch reads IVSHFDIFAFGHFWGWAMKAL. The Cytoplasmic portion of the chain corresponds to 182 to 186; it reads LIRSY. Residues 187–207 form a helical membrane-spanning segment; it reads GLCWTISITWELTELFFMHLL. Residues 208–216 lie on the Lumenal side of the membrane; it reads PNFAECWWD. Residues 217-237 form a helical membrane-spanning segment; that stretch reads QVILDILLCNGGGIWLGMVVC. Over 238 to 286 the chain is Cytoplasmic; the sequence is RFLEMRTYHWASFKDIHTTTGKIKRAVLQFTPASWTYVRWFDPKSSFQR. The chain crosses the membrane as a helical span at residues 287 to 307; sequence VAGVYLFMIIWQLTELNTFFL. Residues 308–309 lie on the Lumenal side of the membrane; that stretch reads KH. Residues 310 to 330 traverse the membrane as a helical segment; the sequence is IFVFQASHPLSWCRILFIGCI. Residues 331–355 lie on the Cytoplasmic side of the membrane; that stretch reads TAPTVRQYYAYLTDTQCKRVGTQCW. A helical transmembrane segment spans residues 356-376; the sequence is VFGVIGFLEAIVCIKFGQDLF. Residues 377 to 380 lie on the Lumenal side of the membrane; sequence SKTQ. Residues 381-401 form a helical membrane-spanning segment; the sequence is ILYVVFWLLCVAFTTFLCLYG. The Cytoplasmic segment spans residues 402 to 471; that stretch reads MVWYAEHYGH…SKVTNGVGKK (70 aa). Phosphoserine is present on residues Ser417, Ser440, and Ser452. Residues 426–471 form a disordered region; the sequence is ISWHHGKGSKGSEDSPPKHSSNNESHSSRRRNRHSKSKVTNGVGKK. The segment covering 453–462 has biased composition (basic residues); sequence SRRRNRHSKS.

It belongs to the phosphatidyl serine synthase family.

Its subcellular location is the endoplasmic reticulum membrane. It carries out the reaction a 1,2-diacyl-sn-glycero-3-phosphoethanolamine + L-serine = a 1,2-diacyl-sn-glycero-3-phospho-L-serine + ethanolamine. The catalysed reaction is a 1,2-diacyl-sn-glycero-3-phosphocholine + L-serine = a 1,2-diacyl-sn-glycero-3-phospho-L-serine + choline. It participates in phospholipid metabolism; phosphatidylserine biosynthesis. Inhibited by exogenous phosphatidylserine. Functionally, catalyzes a base-exchange reaction in which the polar head group of phosphatidylethanolamine (PE) or phosphatidylcholine (PC) is replaced by L-serine. Catalyzes mainly the conversion of phosphatidylcholine. Also converts, in vitro and to a lesser extent, phosphatidylethanolamine. The chain is Phosphatidylserine synthase 1 (PTDSS1) from Cricetulus griseus (Chinese hamster).